The following is a 352-amino-acid chain: 3-dehydroquinate synthase (352 aa).

NAD(+) contacts are provided by residues 60–65 (DGEGAK), 118–119 (TT), Lys131, Lys140, and 158–161 (FLET). Residues Glu173, His237, and His253 each contribute to the Zn(2+) site.

It belongs to the sugar phosphate cyclases superfamily. Dehydroquinate synthase family. It depends on NAD(+) as a cofactor. Co(2+) is required as a cofactor. Zn(2+) serves as cofactor.

Its subcellular location is the cytoplasm. It catalyses the reaction 7-phospho-2-dehydro-3-deoxy-D-arabino-heptonate = 3-dehydroquinate + phosphate. The protein operates within metabolic intermediate biosynthesis; chorismate biosynthesis; chorismate from D-erythrose 4-phosphate and phosphoenolpyruvate: step 2/7. Its function is as follows. Catalyzes the conversion of 3-deoxy-D-arabino-heptulosonate 7-phosphate (DAHP) to dehydroquinate (DHQ). The polypeptide is 3-dehydroquinate synthase (Sulfurisphaera tokodaii (strain DSM 16993 / JCM 10545 / NBRC 100140 / 7) (Sulfolobus tokodaii)).